The chain runs to 468 residues: MAVLTSRATDFPRWYQDVLAKAELADNGPVRGTMVIRPYGYAIWERMQADVDARIKAAGAVNAYFPLFIPESYLRREAEHVEGFSPELAVVTIGGGKELEEPVVVRPTSETIIGEYLAKWTQSYRDLPLLLNQWANVVRWELRPRLFLRSSEFLWQEGHTAHVDEAEAAAYARRIALEVYRDFLTDVLAIPVFIGTKTRKERFAGATNTMTCEGMMGDGKALQMATSHELGQNFARAFDIDFLGADGAKHLAWTTSWGSSTRMVGGLIMAHGDDNGLRIPPRLAPTQVVVLPVRDDETVVAKAREIAAALTDAGLRVQVDARSGLSFGRRVTDAEIKGIPVRVEVGPRDLAAGNVTLVRRDTSVKAAVPLAEAAARVPALLDEVQAGLHAEALALRESRTADVTTVADAAAAAQTGFARIPWRLVGEEGEARLAEDALTVRCLQTPDGEIPPAGGDPDDLICLIARSY.

The protein belongs to the class-II aminoacyl-tRNA synthetase family. ProS type 3 subfamily. As to quaternary structure, homodimer.

Its subcellular location is the cytoplasm. It catalyses the reaction tRNA(Pro) + L-proline + ATP = L-prolyl-tRNA(Pro) + AMP + diphosphate. Its function is as follows. Catalyzes the attachment of proline to tRNA(Pro) in a two-step reaction: proline is first activated by ATP to form Pro-AMP and then transferred to the acceptor end of tRNA(Pro). The polypeptide is Proline--tRNA ligase (Frankia alni (strain DSM 45986 / CECT 9034 / ACN14a)).